The chain runs to 95 residues: CRISPR-associated endoribonuclease Cas2 1 (95 aa).

Asp-11 is a Mg(2+) binding site.

This sequence belongs to the CRISPR-associated endoribonuclease Cas2 protein family. As to quaternary structure, homodimer, forms a heterotetramer with a Cas1 homodimer. Requires Mg(2+) as cofactor.

In terms of biological role, CRISPR (clustered regularly interspaced short palindromic repeat), is an adaptive immune system that provides protection against mobile genetic elements (viruses, transposable elements and conjugative plasmids). CRISPR clusters contain sequences complementary to antecedent mobile elements and target invading nucleic acids. CRISPR clusters are transcribed and processed into CRISPR RNA (crRNA). Functions as a ssRNA-specific endoribonuclease. Involved in the integration of spacer DNA into the CRISPR cassette. The protein is CRISPR-associated endoribonuclease Cas2 1 of Methanospirillum hungatei JF-1 (strain ATCC 27890 / DSM 864 / NBRC 100397 / JF-1).